The chain runs to 474 residues: tRNA-2-methylthio-N(6)-dimethylallyladenosine synthase (474 aa).

Residues 3–120 enclose the MTTase N-terminal domain; it reads KKLHIKTWGC…LPEMIEQIQR (118 aa). Positions 12, 49, 83, 157, 161, and 164 each coordinate [4Fe-4S] cluster. Positions 143-375 constitute a Radical SAM core domain; that stretch reads RADGPTAFVS…QDRITQQAMR (233 aa). Residues 378–441 form the TRAM domain; the sequence is RQMLGTVQRI…TNSLRGEFVR (64 aa).

The protein belongs to the methylthiotransferase family. MiaB subfamily. As to quaternary structure, monomer. [4Fe-4S] cluster serves as cofactor.

It is found in the cytoplasm. It carries out the reaction N(6)-dimethylallyladenosine(37) in tRNA + (sulfur carrier)-SH + AH2 + 2 S-adenosyl-L-methionine = 2-methylsulfanyl-N(6)-dimethylallyladenosine(37) in tRNA + (sulfur carrier)-H + 5'-deoxyadenosine + L-methionine + A + S-adenosyl-L-homocysteine + 2 H(+). Its function is as follows. Catalyzes the methylthiolation of N6-(dimethylallyl)adenosine (i(6)A), leading to the formation of 2-methylthio-N6-(dimethylallyl)adenosine (ms(2)i(6)A) at position 37 in tRNAs that read codons beginning with uridine. The sequence is that of tRNA-2-methylthio-N(6)-dimethylallyladenosine synthase from Shewanella frigidimarina (strain NCIMB 400).